A 748-amino-acid chain; its full sequence is MSSGGRFNFDDGGSYCGGWEDGKAHGHGVCTGPKGQGEYTGSWSHGFEVLGVYTWPSGNTYQGTWAQGKRHGIGLESKGKWVYKGEWTHGFKGRYGVRECAGNGAKYEGTWSNGLQDGYGTETYSDGGTYQGQWVGGMRQGYGVRQSVPYGMAAVIRSPLRTSINSLRSEHTNGTALHPDASPAVAGSPAVSRGGFVLVAHSDSEILKSKKKGLFRRSLLSGLKLRKSESKSSLASQRSKQSSFRSEAGMSTVSSTASDIHSTISLGEAEAELAVIEDDIDATTTETYVGEWKNDKRSGFGVSQRSDGLKYEGEWASNRRHGYGCMTFPDGTKEEGKYKQNILVGGKRKNLIPLRASKIREKVDRAVEAAERAATIAKQKAEIAASRTSHSRAKAEAALTAAQKAQEEARIARITAKEFSPSFQHRENGLEYQRPKRQTSCDDIEVLSTGTPLQQESPELYRKGTTPSDLTPDDSPLQSFPTSPAATPPPAPAARNKVAHFSRQVSVDEERGGDIQMLLEGRAGDCARSSWGEEQAGGSRGVRSGALRGGLLVDDFRTRGSGRKQPGNPKPRERRTESPPVFTWTSHHRASNHSPGGSRLLELQEEKLSNYRMEMKPLLRMETHPQKRRYSKGGACRGLGDDHRPEDRGFGVQRLRSKAQNKENFRPASSAEPAVQKLASLRLGGAEPRLLRWDLTFSPPQKSLPVALESDEENGDELKSSTGSAPILVVMVILLNIGVAILFINFFI.

The Cytoplasmic segment spans residues 1 to 727 (MSSGGRFNFD…LKSSTGSAPI (727 aa)). MORN repeat units follow at residues 15-37 (YCGGWEDGKAHGHGVCTGPKGQG), 39-60 (YTGSWSHGFEVLGVYTWPSGNT), 61-82 (YQGTWAQGKRHGIGLESKGKWV), 83-105 (YKGEWTHGFKGRYGVRECAGNGA), 107-129 (YEGTWSNGLQDGYGTETYSDGGT), and 130-152 (YQGQWVGGMRQGYGVRQSVPYGM). The segment at 230–259 (SKSSLASQRSKQSSFRSEAGMSTVSSTASD) is disordered. The span at 231 to 244 (KSSLASQRSKQSSF) shows a compositional bias: low complexity. The span at 249-259 (GMSTVSSTASD) shows a compositional bias: polar residues. MORN repeat units follow at residues 288–310 (YVGEWKNDKRSGFGVSQRSDGLK) and 311–333 (YEGEWASNRRHGYGCMTFPDGTK). Residues 416 to 496 (AKEFSPSFQH…TPPPAPAARN (81 aa)) form a disordered region. At Ser440 the chain carries Phosphoserine. The span at 448–457 (STGTPLQQES) shows a compositional bias: polar residues. The residue at position 451 (Thr451) is a Phosphothreonine. Ser457 is subject to Phosphoserine. Residue Thr471 is modified to Phosphothreonine. A phosphoserine mark is found at Ser475 and Ser506. Disordered regions lie at residues 526-597 (CARS…SPGG) and 624-649 (HPQKRRYSKGGACRGLGDDHRPEDRG). Positions 639–649 (LGDDHRPEDRG) are enriched in basic and acidic residues. Phosphoserine occurs at positions 703 and 710. A helical; Anchor for type IV membrane protein membrane pass occupies residues 728 to 748 (LVVMVILLNIGVAILFINFFI).

It belongs to the junctophilin family. As to expression, specifically expressed in brain.

The protein resides in the cell membrane. It is found in the endoplasmic reticulum membrane. In terms of biological role, junctophilins contribute to the formation of junctional membrane complexes (JMCs) which link the plasma membrane with the endoplasmic or sarcoplasmic reticulum in excitable cells. Provides a structural foundation for functional cross-talk between the cell surface and intracellular calcium release channels. JPH3 is brain-specific and appears to have an active role in certain neurons involved in motor coordination and memory. In Homo sapiens (Human), this protein is Junctophilin-3 (JPH3).